The chain runs to 1088 residues: MGKYNLILSEYLSFVYNSQSAVQIPIYYSSNSELETRCIEFHAKCVDNSKKGLSLKPLFEEYKDVTDNATLLSILSYSYDKYNAVERKLVSYAKGKPLEADLTANELDYENNKITSELFQSAEEYTDSLMDPAILTSLSSNLNAVMFWLERHSNDIADANKIYKRRLDLFTIVASTINKYGVPRHNEKYRYEYEVMKDKPYYLVTWANSSIEMLMSVFSHEDYLIAKELIVLSYSNRSTLAKLVSSPMSILVALIDINGTFITNEELELEFSDKYVKAIVPDQTFDELQEMINNMKKIGLVDIPRMIQEWLIDCSLEKFTLMSKIYSWSFHVGFRKQKMIDAALDQLKTEYTKDVDDEMYNEYTMLIRDEIVKMLEIPVKHDDHLLRDSELAGLLSMSSASNGESRQIKFGRKTIFSTKKNMHVMDDIAHGKYTPGVIPPVNVDKPIPLGRRDVPGRRTRIIFILPYEYFIAQHAVVEKMLLYAKHTREYAEFYSQSNQLLSYGDVTRFLSSNSMVLYTDVSQWDSSQHNTQPFRKGIIMGLDMLSNMTNDPKVVQALNLYKQTQINLMDSYVQIPDGNVIKKNQYGAVASGEKQTKAANSIANLALIKTVLSRIANKYSFITKIIRVSGDDNYAVLQFNTDLTKQMIQDVSNDVRYIYFRMNAKVKALVSTVGIEIAKRYLAGGKIFFRAGINLLNNEKRGQSTQWDQAAILYSNYIVNKLRGFETDREFILTKIIQMTSVAITGSLRLFPSERVLTTNSTFKVFDSEDFIIEYGTTDDEVYIQRAFMSLSSQKSGIADEIASSQTFKNYVSKLSDQLLVSKNVIVSKGIAVTEKAKLNSYAPIYLEKRRAQISALLTMLQKPVSFKSNKNTINEILRDIKPFFVTTEDNLPIQYRKFMPTLPDNVQYVIQCIGSRTYQIEDSGSKSSISKLISKYSVYKPSIEELYKVISLREQEIQLYLVSLGVPLVDASAYVASRIYSQDKYKILESYVYNLLSINYGCYQLFDFNSPDLEKLIRIPFKGKIPAVTFILHLYAKLEIINYAIKNRAWISVFCNYPKSEMIKLWKKMWSITALRSPYTSANFFQD.

Residues 501 to 687 (LSYGDVTRFL…AKRYLAGGKI (187 aa)) enclose the RdRp catalytic domain.

It belongs to the reoviridae RNA-directed RNA polymerase family. As to quaternary structure, interacts with VP3 (Potential). Interacts with VP2; this interaction activates VP1. Interacts with NSP5; this interaction is probably necessary for the formation of functional virus factories. Interacts with NSP2; this interaction is weak. Mg(2+) serves as cofactor.

It is found in the virion. The enzyme catalyses RNA(n) + a ribonucleoside 5'-triphosphate = RNA(n+1) + diphosphate. Functionally, RNA-directed RNA polymerase that is involved in both transcription and genome replication. Together with VP3 capping enzyme, forms an enzyme complex positioned near the channels situated at each of the five-fold vertices of the core. Following infection, the outermost layer of the virus is lost, leaving a double-layered particle (DLP) made up of the core and VP6 shell. VP1 then catalyzes the transcription of fully conservative plus-strand genomic RNAs that are extruded through the DLP's channels into the cytoplasm where they function as mRNAs for translation of viral proteins. One copy of each of the viral (+)RNAs is also recruited during core assembly, together with newly synthesized polymerase complexes and VP2. The polymerase of these novo-formed particles catalyzes the synthesis of complementary minus-strands leading to dsRNA formation. To do so, the polymerase specifically recognizes and binds 4 bases 5'-UGUG-3' in the conserved 3'-sequence of plus-strand RNA templates. VP2 presumably activates the autoinhibited VP1-RNA complex to coordinate packaging and genome replication. Once dsRNA synthesis is complete, the polymerase switches to the transcriptional mode, thus providing secondary transcription. The sequence is that of RNA-directed RNA polymerase from Rotavirus A (strain RVA/Human/Japan/KU/1995/G1P1A[8]) (RV-A).